A 266-amino-acid chain; its full sequence is F-actin-capping protein subunit beta (266 aa).

Belongs to the F-actin-capping protein beta subunit family. In terms of assembly, component of the F-actin capping complex, composed of a heterodimer of an alpha and a beta subunit.

The protein resides in the cytoplasm. It localises to the cytoskeleton. It is found in the actin patch. Its function is as follows. F-actin-capping proteins bind in a Ca(2+)-independent manner to the fast growing ends of actin filaments (barbed end) thereby blocking the exchange of subunits at these ends. Unlike other capping proteins (such as gelsolin and severin), these proteins do not sever actin filaments. The polypeptide is F-actin-capping protein subunit beta (cap2) (Emericella nidulans (strain FGSC A4 / ATCC 38163 / CBS 112.46 / NRRL 194 / M139) (Aspergillus nidulans)).